The sequence spans 630 residues: Triacylglycerol lipase ptl2 (630 aa).

The 192-residue stretch at 251–442 (LCLSGGASFA…RTDIPLSELR (192 aa)) folds into the PNPLA domain. The short motif at 282–286 (GTSGG) is the GXSXG element. S284 functions as the Nucleophile in the catalytic mechanism. D429 functions as the Proton acceptor in the catalytic mechanism.

The protein belongs to the PLPL family.

It localises to the lipid droplet. It catalyses the reaction a triacylglycerol + H2O = a diacylglycerol + a fatty acid + H(+). Functionally, lipid particle-localized triacylglycerol (TAG) lipase. The lipid droplet/particle is a lipid storage compartment which serves as a depot of energy and building blocks for membrane lipid biosynthesis. Involved in the mobilization of the non-polar storage lipids triacylglycerols (TAGs) from lipid particles by hydrolysis of TAGs, releasing and supplying specific fatty acids to the appropriate metabolic pathways. In Schizosaccharomyces pombe (strain 972 / ATCC 24843) (Fission yeast), this protein is Triacylglycerol lipase ptl2 (ptl2).